A 280-amino-acid polypeptide reads, in one-letter code: Phosphatidylglycerol--prolipoprotein diacylglyceryl transferase (280 aa).

Transmembrane regions (helical) follow at residues 30–50 (WYGLAYVVGILLGWFYARRIV), 71–91 (FLLWAAGGIVLGGRIGYILFY), 106–126 (IWNGGMSFHGGLVGTTLAMII), and 132–152 (AIPIWSLFDVVAAVVPIGLFF). Arg-154 contributes to the a 1,2-diacyl-sn-glycero-3-phospho-(1'-sn-glycerol) binding site. Helical transmembrane passes span 188-208 (QLYEAALEGLVLLAVLAWFVY), 217-237 (GLVTGIFVCGYAASRIFVEFF), and 251-271 (WLTMGMVLSVPMALIGIWAIA).

It belongs to the Lgt family.

It localises to the cell inner membrane. The enzyme catalyses L-cysteinyl-[prolipoprotein] + a 1,2-diacyl-sn-glycero-3-phospho-(1'-sn-glycerol) = an S-1,2-diacyl-sn-glyceryl-L-cysteinyl-[prolipoprotein] + sn-glycerol 1-phosphate + H(+). It participates in protein modification; lipoprotein biosynthesis (diacylglyceryl transfer). Functionally, catalyzes the transfer of the diacylglyceryl group from phosphatidylglycerol to the sulfhydryl group of the N-terminal cysteine of a prolipoprotein, the first step in the formation of mature lipoproteins. In Sinorhizobium medicae (strain WSM419) (Ensifer medicae), this protein is Phosphatidylglycerol--prolipoprotein diacylglyceryl transferase.